A 506-amino-acid polypeptide reads, in one-letter code: Pleckstrin homology domain-containing family D member 1 (506 aa).

The PH domain maps to 28-136 (KVQLYGVLWK…WLEMLQESGK (109 aa)). The stretch at 146–391 (EAMIKSLEAQ…KVRNKEKEER (246 aa)) forms a coiled coil. Arg503 carries the post-translational modification Omega-N-methylarginine.

This sequence belongs to the PLEKHD1 family.

The protein is Pleckstrin homology domain-containing family D member 1 (PLEKHD1) of Homo sapiens (Human).